The chain runs to 146 residues: Hemoglobin subunit beta (146 aa).

The residue at position 1 (V1) is an N-acetylvaline. Positions 2–146 (HLSAEEKAAV…VANALAHKYH (145 aa)) constitute a Globin domain. Residue T12 is modified to Phosphothreonine. Residue S44 is modified to Phosphoserine. N6-acetyllysine is present on K59. H63 lines the heme b pocket. K82 carries the N6-acetyllysine modification. A heme b-binding site is contributed by H92. C93 is subject to S-nitrosocysteine. N6-acetyllysine is present on K144.

Belongs to the globin family. As to quaternary structure, heterotetramer of two alpha chains and two beta chains. In terms of tissue distribution, red blood cells.

Involved in oxygen transport from the lung to the various peripheral tissues. The protein is Hemoglobin subunit beta (HBB) of Ctenodactylus gundi (Northern gundi).